The chain runs to 165 residues: SsrA-binding protein (165 aa).

Residues 141–165 (KLHDKRQDEKRKQADREVKSALARY) form a disordered region. Residues 145–159 (KRQDEKRKQADREVK) are compositionally biased toward basic and acidic residues.

The protein belongs to the SmpB family.

The protein localises to the cytoplasm. In terms of biological role, required for rescue of stalled ribosomes mediated by trans-translation. Binds to transfer-messenger RNA (tmRNA), required for stable association of tmRNA with ribosomes. tmRNA and SmpB together mimic tRNA shape, replacing the anticodon stem-loop with SmpB. tmRNA is encoded by the ssrA gene; the 2 termini fold to resemble tRNA(Ala) and it encodes a 'tag peptide', a short internal open reading frame. During trans-translation Ala-aminoacylated tmRNA acts like a tRNA, entering the A-site of stalled ribosomes, displacing the stalled mRNA. The ribosome then switches to translate the ORF on the tmRNA; the nascent peptide is terminated with the 'tag peptide' encoded by the tmRNA and targeted for degradation. The ribosome is freed to recommence translation, which seems to be the essential function of trans-translation. This chain is SsrA-binding protein, found in Prochlorococcus marinus (strain MIT 9313).